Consider the following 367-residue polypeptide: Peptide chain release factor 2 (367 aa).

Position 254 is an N5-methylglutamine (glutamine 254).

This sequence belongs to the prokaryotic/mitochondrial release factor family. Methylated by PrmC. Methylation increases the termination efficiency of RF2.

It localises to the cytoplasm. Its function is as follows. Peptide chain release factor 2 directs the termination of translation in response to the peptide chain termination codons UGA and UAA. The polypeptide is Peptide chain release factor 2 (Variovorax paradoxus (strain S110)).